Here is a 508-residue protein sequence, read N- to C-terminus: Photosystem II CP47 reaction center protein (508 aa).

The next 6 membrane-spanning stretches (helical) occupy residues 21 to 36, 101 to 115, 140 to 156, 203 to 218, 237 to 252, and 457 to 472; these read AVHL…WAGS, ILLS…IWHW, GIHL…FGAF, IAAG…FHLS, VLSS…AFVV, and WFAL…HGAR.

The protein belongs to the PsbB/PsbC family. PsbB subfamily. PSII is composed of 1 copy each of membrane proteins PsbA, PsbB, PsbC, PsbD, PsbE, PsbF, PsbH, PsbI, PsbJ, PsbK, PsbL, PsbM, PsbT, PsbX, PsbY, PsbZ, Psb30/Ycf12, at least 3 peripheral proteins of the oxygen-evolving complex and a large number of cofactors. It forms dimeric complexes. Requires Binds multiple chlorophylls. PSII binds additional chlorophylls, carotenoids and specific lipids. as cofactor.

The protein localises to the plastid. The protein resides in the chloroplast thylakoid membrane. One of the components of the core complex of photosystem II (PSII). It binds chlorophyll and helps catalyze the primary light-induced photochemical processes of PSII. PSII is a light-driven water:plastoquinone oxidoreductase, using light energy to abstract electrons from H(2)O, generating O(2) and a proton gradient subsequently used for ATP formation. The sequence is that of Photosystem II CP47 reaction center protein from Nephroselmis olivacea (Green alga).